Here is a 92-residue protein sequence, read N- to C-terminus: Acylphosphatase (92 aa).

C5 and C49 form a disulfide bridge. The region spanning 5-92 is the Acylphosphatase-like domain; the sequence is CIIAWVYGRV…SGELTDFRIR (88 aa). Active-site residues include R20 and N38.

It belongs to the acylphosphatase family.

It catalyses the reaction an acyl phosphate + H2O = a carboxylate + phosphate + H(+). The polypeptide is Acylphosphatase (Escherichia coli O157:H7).